We begin with the raw amino-acid sequence, 80 residues long: RNA-binding protein Hfq (80 aa).

The Sm domain occupies 10–70 (DLFLNTVRKQ…ISTIMPGQPM (61 aa)).

The protein belongs to the Hfq family. In terms of assembly, homohexamer.

Its function is as follows. RNA chaperone that binds small regulatory RNA (sRNAs) and mRNAs to facilitate mRNA translational regulation in response to envelope stress, environmental stress and changes in metabolite concentrations. Also binds with high specificity to tRNAs. This Rhizobium rhizogenes (strain K84 / ATCC BAA-868) (Agrobacterium radiobacter) protein is RNA-binding protein Hfq.